We begin with the raw amino-acid sequence, 262 residues long: Hydroxyethylthiazole kinase (262 aa).

A substrate-binding site is contributed by Met-50. Residues Arg-125 and Thr-171 each coordinate ATP. Gly-198 is a substrate binding site.

Belongs to the Thz kinase family. Mg(2+) is required as a cofactor.

The catalysed reaction is 5-(2-hydroxyethyl)-4-methylthiazole + ATP = 4-methyl-5-(2-phosphooxyethyl)-thiazole + ADP + H(+). It functions in the pathway cofactor biosynthesis; thiamine diphosphate biosynthesis; 4-methyl-5-(2-phosphoethyl)-thiazole from 5-(2-hydroxyethyl)-4-methylthiazole: step 1/1. Catalyzes the phosphorylation of the hydroxyl group of 4-methyl-5-beta-hydroxyethylthiazole (THZ). The protein is Hydroxyethylthiazole kinase of Escherichia fergusonii (strain ATCC 35469 / DSM 13698 / CCUG 18766 / IAM 14443 / JCM 21226 / LMG 7866 / NBRC 102419 / NCTC 12128 / CDC 0568-73).